The chain runs to 309 residues: Dicarboxylate carrier UCP2 (309 aa).

Topologically, residues 1–16 are mitochondrial intermembrane; the sequence is MVGFKATDVPPTATVK. Solcar repeat units lie at residues 11–106, 114–203, and 212–297; these read PTAT…VKQF, ASIG…IKDA, and DDLP…LKRA. Residues 16 to 63 form an important for interaction with long-chain fatty acids region; that stretch reads KFLGAGTAACIADLITFPLDTAKVRLQIQGESQGPVHATASAQYRGVM. The chain crosses the membrane as a helical span at residues 17–40; sequence FLGAGTAACIADLITFPLDTAKVR. Over 41–77 the chain is Mitochondrial matrix; it reads LQIQGESQGPVHATASAQYRGVMGTILTMVRTEGPRS. The helical transmembrane segment at 78–103 threads the bilayer; the sequence is LYNGLVAGLQRQMSFASVRIGLYDSV. The Mitochondrial intermembrane segment spans residues 104-119; sequence KQFYTKGSEHASIGSR. The chain crosses the membrane as a helical span at residues 120–145; the sequence is LLAGSTTGALAVAVAQPTDVVKVRFQ. Residues 146-173 are Mitochondrial matrix-facing; that stretch reads AQARAGGGRRYQSTVNAYKTIAREEGFR. Residues 174–199 form a helical membrane-spanning segment; it reads GLWKGTSPNVARNAIVNCAELVTYDL. Residues 200 to 217 are Mitochondrial intermembrane-facing; the sequence is IKDALLKANLMTDDLPCH. Residues 218 to 242 traverse the membrane as a helical segment; sequence FTSAFGAGFCTTVIASPVDVVKTRY. The Mitochondrial matrix portion of the chain corresponds to 243–268; sequence MNSALGQYSSAGHCALTMLQKEGPRA. The helical transmembrane segment at 269–294 threads the bilayer; it reads FYKGFMPSFLRLGSWNVVMFVTYEQL. The tract at residues 278 to 285 is important for interaction with long-chain fatty acids; the sequence is LRLGSWNV. Topologically, residues 295 to 309 are mitochondrial intermembrane; sequence KRALMAACTSREAPF.

Belongs to the mitochondrial carrier (TC 2.A.29) family. As to quaternary structure, homotetramer. Adopts an asymmetrical dimer of dimers functional form. Interacts with MICU1 (when methylated); leading to decrease the calcium sensitivity of MICU1.

It localises to the mitochondrion inner membrane. The catalysed reaction is L-aspartate(out) + phosphate(in) + H(+)(in) = L-aspartate(in) + phosphate(out) + H(+)(out). It carries out the reaction oxaloacetate(out) + phosphate(in) + H(+)(in) = oxaloacetate(in) + phosphate(out) + H(+)(out). The enzyme catalyses (S)-malate(out) + phosphate(in) + H(+)(in) = (S)-malate(in) + phosphate(out) + H(+)(out). It catalyses the reaction malonate(out) + phosphate(in) + H(+)(in) = malonate(in) + phosphate(out) + H(+)(out). The catalysed reaction is sulfate(out) + phosphate(in) + H(+)(in) = sulfate(in) + phosphate(out) + H(+)(out). It carries out the reaction (S)-malate(out) = (S)-malate(in). The enzyme catalyses L-aspartate(out) = L-aspartate(in). It catalyses the reaction phosphate(in) = phosphate(out). The catalysed reaction is chloride(in) = chloride(out). It carries out the reaction H(+)(in) = H(+)(out). The enzyme catalyses a long-chain fatty acid(out) = a long-chain fatty acid(in). Its function is as follows. Antiporter that exports dicarboxylate intermediates of the Krebs cycle in exchange for phosphate plus a proton across the inner membrane of mitochondria, a process driven by mitochondrial motive force with an overall impact on glycolysis, glutaminolysis and glutathione-dependent redox balance. Continuous export of oxaloacetate and related four-carbon dicarboxylates from mitochondrial matrix into the cytosol negatively regulates the oxidation of acetyl-CoA substrates via the Krebs cycle lowering the ATP/ADP ratio and reactive oxygen species (ROS) production. May mediate inducible proton entry into the mitochondrial matrix affecting ATP turnover as a protection mechanism against oxidative stress. The proton currents are most likely associated with fatty acid flipping across the inner membrane of mitochondria in a metabolic process regulated by free fatty acids and purine nucleotides. Regulates the use of glucose as a source of energy. Required for glucose-induced DRP1-dependent mitochondrial fission and neuron activation in the ventromedial nucleus of the hypothalamus (VMH). This mitochondrial adaptation mechanism modulates the VMH pool of glucose-excited neurons with an impact on systemic glucose homeostasis. Regulates ROS levels and metabolic reprogramming of macrophages during the resolution phase of inflammation. Attenuates ROS production in response to IL33 to preserve the integrity of the Krebs cycle required for persistent production of itaconate and subsequent GATA3-dependent differentiation of inflammation-resolving alternatively activated macrophages. Can unidirectionally transport anions including L-malate, L-aspartate, phosphate and chloride ions. Does not mediate adaptive thermogenesis. The sequence is that of Dicarboxylate carrier UCP2 (UCP2) from Pongo abelii (Sumatran orangutan).